The primary structure comprises 311 residues: MTKLIFMGTPDFSATVLKGLLTDDRYEILAVVTQPDRAVGRKKVIQETPVKQAAKEAGLSIYQPEKLSGSPEMEDLMKLGADGIVTAAFGQFLPSKLLDSMDFAVNVHASLLPRHRGGAPIHYALIQGDEEAGVTIMEMVKEMDAGDMISRRSIPITDEDNVGTLFEKLALVGRDLLLDTLPAYIAGDIKPEPQDTSQVTFSPNIKPEEEKLDWNKTNRQLFNQIRGMNPWPVAHTFLKGDRFKIYEALPVEGQGNPGEILSIGKKELIVATAEGALSLKQVQPAGKPKMDIASFLNGVGRTLTVGERFGD.

110–113 (SLLP) contacts (6S)-5,6,7,8-tetrahydrofolate.

Belongs to the Fmt family.

It catalyses the reaction L-methionyl-tRNA(fMet) + (6R)-10-formyltetrahydrofolate = N-formyl-L-methionyl-tRNA(fMet) + (6S)-5,6,7,8-tetrahydrofolate + H(+). Functionally, attaches a formyl group to the free amino group of methionyl-tRNA(fMet). The formyl group appears to play a dual role in the initiator identity of N-formylmethionyl-tRNA by promoting its recognition by IF2 and preventing the misappropriation of this tRNA by the elongation apparatus. The protein is Methionyl-tRNA formyltransferase of Streptococcus pneumoniae (strain Taiwan19F-14).